The following is a 155-amino-acid chain: Ribosome maturation factor RimP (155 aa).

The protein belongs to the RimP family.

It localises to the cytoplasm. Required for maturation of 30S ribosomal subunits. The protein is Ribosome maturation factor RimP of Staphylococcus carnosus (strain TM300).